The following is a 222-amino-acid chain: Chromatin-associated protein SWI6 (222 aa).

Residues 1–15 (MPVIKKEELSQKKDL) show a composition bias toward basic and acidic residues. Disordered regions lie at residues 1-26 (MPVIKKEELSQKKDLESEEEDSGLED) and 77-147 (ETQD…DRQY). The segment covering 16–26 (ESEEEDSGLED) has biased composition (acidic residues). In terms of domain architecture, Chromo spans 28-87 (YEVEKVIKHRGKGKNIEFLVRWKGYGPEYDTWEPTENVASAEEAVAAYWETQDKTATAPR).

In terms of assembly, interacts with DMT5.

The protein localises to the nucleus. Its function is as follows. Recognizes and binds histone H3 tails methylated at 'Lys-9', leading to epigenetic repression. Localizes DMT5 to heterochromatin characterized by trimethylation of histone H3 tails at 'Lys-9'. The chain is Chromatin-associated protein SWI6 from Cryptococcus neoformans var. grubii serotype A (strain H99 / ATCC 208821 / CBS 10515 / FGSC 9487) (Filobasidiella neoformans var. grubii).